Here is a 100-residue protein sequence, read N- to C-terminus: Signal recognition particle 19 kDa protein (100 aa).

It belongs to the SRP19 family. In terms of assembly, part of the signal recognition particle protein translocation system, which is composed of SRP and FtsY. Archaeal SRP consists of a 7S RNA molecule of 300 nucleotides and two protein subunits: SRP54 and SRP19.

It is found in the cytoplasm. Its function is as follows. Involved in targeting and insertion of nascent membrane proteins into the cytoplasmic membrane. Binds directly to 7S RNA and mediates binding of the 54 kDa subunit of the SRP. The chain is Signal recognition particle 19 kDa protein from Pyrococcus furiosus (strain ATCC 43587 / DSM 3638 / JCM 8422 / Vc1).